A 355-amino-acid chain; its full sequence is DNA polymerase IV (355 aa).

Residues 7–188 enclose the UmuC domain; the sequence is IIHIDMDCFY…LPVRKLFGVG (182 aa). Positions 11 and 106 each coordinate Mg(2+). Residue Glu-107 is part of the active site.

It belongs to the DNA polymerase type-Y family. In terms of assembly, monomer. It depends on Mg(2+) as a cofactor.

The protein localises to the cytoplasm. It catalyses the reaction DNA(n) + a 2'-deoxyribonucleoside 5'-triphosphate = DNA(n+1) + diphosphate. Poorly processive, error-prone DNA polymerase involved in untargeted mutagenesis. Copies undamaged DNA at stalled replication forks, which arise in vivo from mismatched or misaligned primer ends. These misaligned primers can be extended by PolIV. Exhibits no 3'-5' exonuclease (proofreading) activity. May be involved in translesional synthesis, in conjunction with the beta clamp from PolIII. This chain is DNA polymerase IV, found in Legionella pneumophila (strain Lens).